An 834-amino-acid polypeptide reads, in one-letter code: MDNTAITSQSSSTPLVCSVTPIIVGSPPSPANVIELSSPSTPPTPLTLLASLSETPSRKTTNPDTNGENTICHGVRQVRRVPRNNPVTGPSKEHKQRTRSPKTTTRREIKIVEGDRLIVGHDKREKKGETTKRMKKRDGVADKKLYARVSKVKSSENLDLDAKIPSSKVCNNTLPLVGDDMDNGSSELKLEQAIKRRHDWTPTREVTTPVVDVAELHSSPCGKAVTRMHGVGTLLSDYGFSGVVETSLGTKSESFRNAPTTKRPMELQKFSTVPAIPTPTESSTTEDVQGSSSKQQRVKAKKPQKGKLTTITSHATAKYCVADQTVDLDYIQNVAPKSPRRKNISNRPSGTKHSNSGRGKSSTLKNDNGRPVFRVVPPLEAFKSFEGQELLFGTSSQLERGYPEYPCDETQDTQNSPSNSAAVSELAVPYRISSEGKDLGSSLFGLSGSKNLWSASARDLTGAVFEGDEIDFQGASMGLSVLATKSRCHPGNRGPPRRNLVDVDNVPDKKLDIDTTEGENGNHSSVADNIVDRENLNPKISANTSETNLECAPQNKPAFSRFTTSELAKKVAAYGFKPIKSRDNMISLLEKCWETQSKTLILESKPNQGTDDARKNGFRKENHSDVRVRPDSATLANRRSPKKQQAKALSKFQEPNNFLPIENSTTTASMLPIISSHTILINDDQLSDSVGETVSFLPSLDHNGNGTTIQENMLEIKSPATPNARRSRQGSSSASFSIEPPSLASQITKAIKSQPRTRAFNGLKQPTWYEKILMYDPIQLEDLAAWLNTDGFGRIGEDREVGPGVVREWCESKGVCCVWKKQVSGRSHYLPMVS.

Disordered regions lie at residues 80–105, 272–307, 332–372, 401–421, 603–649, and 720–740; these read RVPR…KTTT, TVPA…QKGK, QNVA…GRPV, GYPE…SNSA, ESKP…AKAL, and ATPN…SIEP. A compositionally biased stretch (polar residues) spans 279–295; the sequence is PTESSTTEDVQGSSSKQ. The span at 296–305 shows a compositional bias: basic residues; the sequence is QRVKAKKPQK. Polar residues-rich tracts occupy residues 345–366 and 412–421; these read SNRP…TLKN and DTQNSPSNSA. Residues 611 to 630 are compositionally biased toward basic and acidic residues; sequence DDARKNGFRKENHSDVRVRP. Residues 729–740 show a composition bias toward low complexity; it reads QGSSSASFSIEP.

Belongs to the SLX4 family. Forms a heterodimer with SLX1. In terms of processing, phosphorylated in response to DNA damage.

The protein resides in the nucleus. Functionally, regulatory subunit of the SLX1-SLX4 structure-specific endonuclease that resolves DNA secondary structures generated during DNA repair and recombination. Has endonuclease activity towards branched DNA substrates, introducing single-strand cuts in duplex DNA close to junctions with ss-DNA. The protein is Structure-specific endonuclease subunit SLX4 of Ajellomyces capsulatus (strain NAm1 / WU24) (Darling's disease fungus).